The primary structure comprises 861 residues: Leucine--tRNA ligase (861 aa).

Residues 42-52 (PYPSGKLHMGH) carry the 'HIGH' region motif. The short motif at 619–623 (KMSKS) is the 'KMSKS' region element. Residue lysine 622 participates in ATP binding.

The protein belongs to the class-I aminoacyl-tRNA synthetase family.

The protein resides in the cytoplasm. It catalyses the reaction tRNA(Leu) + L-leucine + ATP = L-leucyl-tRNA(Leu) + AMP + diphosphate. The sequence is that of Leucine--tRNA ligase from Actinobacillus pleuropneumoniae serotype 5b (strain L20).